The following is a 702-amino-acid chain: DnaJ homolog subfamily C member 14 (702 aa).

Disordered regions lie at residues 1–148 and 165–229; these read MAQK…GGNG and DELE…KRSQ. Pro residues predominate over residues 75–84; sequence HGPPGGPGPP. Positions 88–103 are enriched in acidic residues; that stretch reads EDPDQSETSSEEESGV. Over residues 113-133 the composition is skewed to polar residues; it reads TGNQKDGNSFLSIPSACNCQG. The span at 165-175 shows a compositional bias: acidic residues; the sequence is DELEEEYDDEE. The span at 192 to 201 shows a compositional bias: basic residues; the sequence is PPSRRQRHRF. Basic and acidic residues predominate over residues 202-217; that stretch reads PTKEDTREGGRRDPRS. The segment covering 218–227 has biased composition (basic residues); the sequence is PGRHRLGRKR. A run of 3 helical transmembrane segments spans residues 250 to 270, 300 to 320, and 326 to 346; these read AGFWWLIELLVLVGEYVETCG, GWAQVMFQFLSQGFYCGVGLF, and LLGALLLLALALFLGFLQLGW. The J domain maps to 443-507; the sequence is NPFHVLGVEA…EKRKEYEMKR (65 aa). The tract at residues 658-702 is disordered; that stretch reads MPNGNFFAAPQPAPGAAAASKPNSTVPKGEAKPKRRKKVRRPFQR. Positions 659 to 676 are enriched in low complexity; that stretch reads PNGNFFAAPQPAPGAAAA. Over residues 690–702 the composition is skewed to basic residues; that stretch reads PKRRKKVRRPFQR.

Interacts with the FxxxFxxxF motif of DRD1 via its C-terminal domain. In terms of tissue distribution, highly expressed in pancreas and selectively expressed in brain, lung, liver, skeletal muscle and kidney.

The protein resides in the endoplasmic reticulum membrane. Functionally, regulates the export of target proteins, such as DRD1, from the endoplasmic reticulum to the cell surface. This Homo sapiens (Human) protein is DnaJ homolog subfamily C member 14 (DNAJC14).